The primary structure comprises 160 residues: CXXC motif containing zinc binding protein (160 aa).

Zn(2+) contacts are provided by C33, C36, C67, and C70. S75 carries the phosphoserine modification.

Belongs to the UPF0587 family. In terms of assembly, monomer.

This is CXXC motif containing zinc binding protein (Czib) from Mus musculus (Mouse).